Here is a 1004-residue protein sequence, read N- to C-terminus: Glutamate [NMDA] receptor subunit 1 (1004 aa).

An N-terminal signal peptide occupies residues 1 to 39 (MAGTDSPAAARFVYRCLLFAPAIVVGLLLPLTLPPIAAA). Over 40–585 (QRHTASDNPS…TLVSFLQPFS (546 aa)) the chain is Extracellular. Residues N270, N326, N357, N409, N466, N493, and N513 are each glycosylated (N-linked (GlcNAc...) asparagine). Glycine contacts are provided by residues 542 to 544 (PLT) and R549. The chain crosses the membrane as a helical span at residues 586 to 606 (NTLWILVMVSVHVVALVLYLL). At 607–663 (DRFSPFGRFKLSHSDSNEEKALNLSSAVWFAWGVLLNSGIGEGTPRSFSARVLGMVW) the chain is on the cytoplasmic side. The helical transmembrane segment at 664–684 (AGFAMIIVASYTANLAAFLVL) threads the bilayer. Residues 685 to 843 (ERPKTKLSGI…KTPNTLGLKN (159 aa)) are Extracellular-facing. N-linked (GlcNAc...) asparagine glycosylation occurs at N705. Residues S715 and D759 each contribute to the glycine site. Residues 844 to 864 (MAGVFILVGVGIAGGVGLIII) traverse the membrane as a helical segment. Residues 865-1004 (EVIYKKHQVK…YTSDVSHLVV (140 aa)) are Cytoplasmic-facing. The disordered stretch occupies residues 980-1004 (TRPQQNILPPRYSPGYTSDVSHLVV). The span at 994-1004 (GYTSDVSHLVV) shows a compositional bias: polar residues.

The protein belongs to the glutamate-gated ion channel (TC 1.A.10.1) family. In terms of assembly, forms a heteromeric NMDA channel with Nmdar2.

It localises to the cell membrane. It is found in the postsynaptic cell membrane. Its subcellular location is the postsynaptic density. In terms of biological role, NMDA receptor subtype of glutamate-gated ion channels with high calcium permeability and voltage-dependent sensitivity to magnesium. Mediated by glycine. This protein plays a key role in synaptic plasticity, synaptogenesis, excitotoxicity, memory acquisition and learning. It mediates neuronal functions in glutamate neurotransmission. Is involved in the cell surface targeting of NMDA receptors. Plays a role in associative learning and in long-term memory consolidation. The sequence is that of Glutamate [NMDA] receptor subunit 1 from Drosophila persimilis (Fruit fly).